A 150-amino-acid chain; its full sequence is Small ribosomal subunit protein uS7c (150 aa).

This sequence belongs to the universal ribosomal protein uS7 family. As to quaternary structure, part of the 30S ribosomal subunit.

It localises to the plastid. The protein resides in the chloroplast. One of the primary rRNA binding proteins, it binds directly to 16S rRNA where it nucleates assembly of the head domain of the 30S subunit. The polypeptide is Small ribosomal subunit protein uS7c (rps7) (Huperzia lucidula (Shining clubmoss)).